Reading from the N-terminus, the 114-residue chain is MGALEPSWCLLFLPVLLTVGGLSPVQAQSDTFPRCDCSSVSPGVLAGIVLGDLVLTLLIALAVYSLGRLVSRGQGTAEGTRKQHIAETESPYQELQGQRPEVYSDLNTQRQYYR.

The N-terminal stretch at 1–21 (MGALEPSWCLLFLPVLLTVGG) is a signal peptide. Residues 22–42 (LSPVQAQSDTFPRCDCSSVSP) lie on the Extracellular side of the membrane. A helical membrane pass occupies residues 43-63 (GVLAGIVLGDLVLTLLIALAV). Asp-52 is a Ca(2+) binding site. Residues 64-114 (YSLGRLVSRGQGTAEGTRKQHIAETESPYQELQGQRPEVYSDLNTQRQYYR) are Cytoplasmic-facing. The interval 74 to 107 (QGTAEGTRKQHIAETESPYQELQGQRPEVYSDLN) is disordered. The 29-residue stretch at 81-109 (RKQHIAETESPYQELQGQRPEVYSDLNTQ) folds into the ITAM domain. Phosphotyrosine occurs at positions 92 and 103.

This sequence belongs to the TYROBP family. In terms of assembly, homodimer; disulfide-linked. Homotrimer; disulfide-linked. Homotetramer; disulfide-linked. Homotrimers and homotetramers form when low levels of partner receptors are available and are competitive with assembly with interacting receptors. They may represent alternative oligomerization states or may be intermediates in the receptor assembly process. Binding of a metal cation aids in homooligomerization through coordination of the metal ion by the subunits of the oligomer. Interacts with TREM1. Interacts with TREM2. Interacts with TREM3. Interacts with CLECSF5. Interacts with CD300LB and CD300C2. Interacts with CD300E. Interacts (via ITAM domain) with SYK (via SH2 domains); activates SYK mediating neutrophil and macrophage integrin-mediated activation. Interacts (via transmembrane domain) with KLRK1 isoform 2 (via transmembrane domain); the interaction is required for KLRK1 NK cell surface expression and NK cell-mediated cytotoxicity. Interacts with KLRC2. Interacts with CD300H. Interacts with KLRD1. Interacts with KLRA4 and KLRA8. Post-translationally, tyrosine phosphorylated. Following ligand binding by associated receptors, tyrosine phosphorylated in the ITAM domain which leads to activation of additional tyrosine kinases and subsequent cell activation. Expressed on microglia (at protein level). Expressed on oligodendrocytes (at protein level). Expressed on macrophages and osteoclasts. Expressed on dendritic cells in liver, spleen, kidney and lung with highest levels in liver dendritic cells.

Its subcellular location is the cell membrane. In terms of biological role, adapter protein which non-covalently associates with activating receptors found on the surface of a variety of immune cells to mediate signaling and cell activation following ligand binding by the receptors. TYROBP is tyrosine-phosphorylated in the ITAM domain following ligand binding by the associated receptors which leads to activation of additional tyrosine kinases and subsequent cell activation. Also has an inhibitory role in some cells. Non-covalently associates with activating receptors of the CD300 family to mediate cell activation. Also mediates cell activation through association with activating receptors of the CD200R family. Required for neutrophil activation mediated by integrin. Required for the activation of myeloid cells mediated by the CLEC5A/MDL1 receptor. Associates with natural killer (NK) cell receptors such as the KLRD1/KLRC2 heterodimer to mediate NK cell activation. Also associates non-covalently with the NK cell receptors KLRA4/LY49D and KLRA8/LY49H which leads to NK cell activation. Associates with TREM1 to mediate activation of neutrophils and monocytes. Associates with TREM2 on monocyte-derived dendritic cells to mediate up-regulation of chemokine receptor CCR7 and dendritic cell maturation and survival. Association with TREM2 mediates cytokine-induced formation of multinucleated giant cells which are formed by the fusion of macrophages. Stabilizes the TREM2 C-terminal fragment (TREM2-CTF) which is produced by TREM2 ectodomain shedding. In microglia, required with TREM2 for phagocytosis of apoptotic neurons. Required with ITGAM/CD11B in microglia to control production of microglial superoxide ions which promote the neuronal apoptosis that occurs during brain development. Promotes pro-inflammatory responses in microglia following nerve injury which accelerates degeneration of injured neurons. Positively regulates the expression of the IRAK3/IRAK-M kinase and IL10 production by liver dendritic cells and inhibits their T cell allostimulatory ability. Negatively regulates B cell proliferation. Required for CSF1-mediated osteoclast cytoskeletal organization. Positively regulates multinucleation during osteoclast development. The chain is TYRO protein tyrosine kinase-binding protein from Mus musculus (Mouse).